A 424-amino-acid chain; its full sequence is Serine hydroxymethyltransferase (424 aa).

(6S)-5,6,7,8-tetrahydrofolate contacts are provided by residues leucine 118 and 122-124 (GHL). Lysine 227 carries the N6-(pyridoxal phosphate)lysine modification. 351–353 (SPF) contributes to the (6S)-5,6,7,8-tetrahydrofolate binding site.

The protein belongs to the SHMT family. As to quaternary structure, homodimer. It depends on pyridoxal 5'-phosphate as a cofactor.

It is found in the cytoplasm. The catalysed reaction is (6R)-5,10-methylene-5,6,7,8-tetrahydrofolate + glycine + H2O = (6S)-5,6,7,8-tetrahydrofolate + L-serine. It functions in the pathway one-carbon metabolism; tetrahydrofolate interconversion. It participates in amino-acid biosynthesis; glycine biosynthesis; glycine from L-serine: step 1/1. Its function is as follows. Catalyzes the reversible interconversion of serine and glycine with tetrahydrofolate (THF) serving as the one-carbon carrier. This reaction serves as the major source of one-carbon groups required for the biosynthesis of purines, thymidylate, methionine, and other important biomolecules. Also exhibits THF-independent aldolase activity toward beta-hydroxyamino acids, producing glycine and aldehydes, via a retro-aldol mechanism. The sequence is that of Serine hydroxymethyltransferase from Pseudothermotoga lettingae (strain ATCC BAA-301 / DSM 14385 / NBRC 107922 / TMO) (Thermotoga lettingae).